A 184-amino-acid polypeptide reads, in one-letter code: Large ribosomal subunit protein uL6 (184 aa).

Belongs to the universal ribosomal protein uL6 family. In terms of assembly, part of the 50S ribosomal subunit.

Functionally, this protein binds to the 23S rRNA, and is important in its secondary structure. It is located near the subunit interface in the base of the L7/L12 stalk, and near the tRNA binding site of the peptidyltransferase center. The sequence is that of Large ribosomal subunit protein uL6 from Mycoplasma genitalium (strain ATCC 33530 / DSM 19775 / NCTC 10195 / G37) (Mycoplasmoides genitalium).